The primary structure comprises 191 residues: Cell division protein SepF (191 aa).

Residues 151-165 (SSSPEEASPSSVPTE) are compositionally biased toward low complexity. The disordered stretch occupies residues 151 to 191 (SSSPEEASPSSVPTENTPQYSLGKNTTPEPAWGNSKLSAYS). Positions 166 to 178 (NTPQYSLGKNTTP) are enriched in polar residues.

It belongs to the SepF family. As to quaternary structure, homodimer. Interacts with FtsZ.

The protein resides in the cytoplasm. In terms of biological role, cell division protein that is part of the divisome complex and is recruited early to the Z-ring. Probably stimulates Z-ring formation, perhaps through the cross-linking of FtsZ protofilaments. Its function overlaps with FtsA. The protein is Cell division protein SepF of Prochlorococcus marinus (strain MIT 9215).